A 39-amino-acid polypeptide reads, in one-letter code: Photosystem II reaction center protein L (39 aa).

The chain crosses the membrane as a helical span at residues 18 to 38 (SLYLGLLLTFVMGILFSSYFF).

The protein belongs to the PsbL family. As to quaternary structure, PSII is composed of 1 copy each of membrane proteins PsbA, PsbB, PsbC, PsbD, PsbE, PsbF, PsbH, PsbI, PsbJ, PsbK, PsbL, PsbM, PsbT, PsbX, PsbY, Psb30/Ycf12, peripheral proteins PsbO, CyanoQ (PsbQ), PsbU, PsbV and a large number of cofactors. It forms dimeric complexes.

It localises to the cellular thylakoid membrane. In terms of biological role, one of the components of the core complex of photosystem II (PSII). PSII is a light-driven water:plastoquinone oxidoreductase that uses light energy to abstract electrons from H(2)O, generating O(2) and a proton gradient subsequently used for ATP formation. It consists of a core antenna complex that captures photons, and an electron transfer chain that converts photonic excitation into a charge separation. This subunit is found at the monomer-monomer interface and is required for correct PSII assembly and/or dimerization. This chain is Photosystem II reaction center protein L, found in Prochlorococcus marinus (strain MIT 9211).